The primary structure comprises 486 residues: Argininosuccinate lyase (486 aa).

The protein belongs to the lyase 1 family. Argininosuccinate lyase subfamily.

It is found in the cytoplasm. The catalysed reaction is 2-(N(omega)-L-arginino)succinate = fumarate + L-arginine. It functions in the pathway amino-acid biosynthesis; L-arginine biosynthesis; L-arginine from L-ornithine and carbamoyl phosphate: step 3/3. The chain is Argininosuccinate lyase from Acidobacterium capsulatum (strain ATCC 51196 / DSM 11244 / BCRC 80197 / JCM 7670 / NBRC 15755 / NCIMB 13165 / 161).